The chain runs to 241 residues: Probable 2-phosphosulfolactate phosphatase (241 aa).

The protein belongs to the ComB family. Mg(2+) is required as a cofactor.

It carries out the reaction (2R)-O-phospho-3-sulfolactate + H2O = (2R)-3-sulfolactate + phosphate. In Deinococcus geothermalis (strain DSM 11300 / CIP 105573 / AG-3a), this protein is Probable 2-phosphosulfolactate phosphatase.